A 100-amino-acid polypeptide reads, in one-letter code: Elevenin (100 aa).

Positions 1–24 (MALSQKALLVLVLSMLLTASDSWA) are cleaved as a signal peptide. A disulfide bridge links cysteine 29 with cysteine 38. Residues 44 to 100 (KRGGDSLSVGGSAELDDTLTDPFLKSEEPKEWRELTRLSRVLQTFLSHPTGEMEQHD) constitute a propeptide that is removed on maturation.

This sequence belongs to the elevenin family. In terms of assembly, monomer. As to expression, expressed by the venom duct.

It localises to the secreted. Functionally, may mimic the function of prey elevenin neuropeptide. In vivo, intracranial injection in mice induces hyperactivity. The sequence is that of Elevenin from Conus ammiralis (Admiral cone).